Here is a 172-residue protein sequence, read N- to C-terminus: MSSSDSPQLHNIFVYGSFQEPDIIHVMLNRIPEIVSATLPGFKRFRLKGRLYPCIIPSENGEVHGKVLMGLTNDELENVDWVEGNEYERVFVEVVRKDNSEKMRVETYPWINKNDPDIGGEWDFEEWKRLHMKTFIEAFTEIMERKRNPQGKGRDDFSNVLKEEDPANAPSS.

Substrate is bound at residue 15–20 (YGSFQE). E83 functions as the Proton acceptor in the catalytic mechanism. Residues 146-165 (KRNPQGKGRDDFSNVLKEED) show a composition bias toward basic and acidic residues. The tract at residues 146 to 172 (KRNPQGKGRDDFSNVLKEEDPANAPSS) is disordered.

Belongs to the gamma-glutamylcyclotransferase family. As to expression, expressed in flowerss, leaves, stems, seeds and roots.

It localises to the cell membrane. Its function is as follows. Putative gamma-glutamylcyclotransferase. The protein is AIG2-like protein B of Arabidopsis thaliana (Mouse-ear cress).